The chain runs to 1003 residues: Phosphatidylinositol 4,5-bisphosphate 5-phosphatase A (1003 aa).

2 disordered regions span residues 1–110 (MEGQ…AAKS) and 147–414 (AMPR…QPTC). The short motif at 6 to 11 (RSGSAR) is the RSXSXX motif 1 element. Residues 11–24 (RPGTRTGLGPLPGT) are compositionally biased toward low complexity. Arg-56 is modified (asymmetric dimethylarginine; alternate). Omega-N-methylarginine; alternate is present on Arg-56. An Omega-N-methylarginine modification is found at Arg-65. Arg-76 is modified (asymmetric dimethylarginine). Position 83 is an asymmetric dimethylarginine; alternate (Arg-83). Position 83 is an omega-N-methylarginine; alternate (Arg-83). A compositionally biased stretch (polar residues) spans 160–174 (LTPTSRDQKQLSPTS). Ser-171 carries the post-translational modification Phosphoserine. Residues 180–196 (ALATSGLSLALASQEQP) are compositionally biased toward low complexity. A compositionally biased stretch (pro residues) spans 197 to 210 (PQSPSSPSPVPSPV). Over residues 284 to 294 (ARPEAPRHSPE) the composition is skewed to basic and acidic residues. Ser-292 and Ser-325 each carry phosphoserine. Pro residues predominate over residues 338 to 348 (VPPPLPKPPRS). An SH3-binding motif is present at residues 346–351 (PRSPSR). Low complexity-rich tracts occupy residues 349-361 (PSRS…NRSP) and 390-413 (QAQE…AQPT). The RSXSXX motif 2 signature appears at 351-356 (RSPSRS). Positions 422–725 (ITVVTWNVGT…SDHKPVAAQF (304 aa)) are catalytic. The interval 726–837 (ILQFAFRDDV…IGVTEPFQIS (112 aa)) is required for ruffle localization. Residues 839–1003 (PTSESASSST…LGLEEGGLGP (165 aa)) are disordered. Residues 840–855 (TSESASSSTDSSGTSS) show a composition bias toward low complexity. Short sequence motifs (RSXSXX motif) lie at residues 871 to 876 (RSPSPG) and 882 to 887 (RSRSPG). Ser-900 carries the phosphoserine modification. 2 stretches are compositionally biased toward low complexity: residues 907–919 (SRSP…QLPR) and 927–943 (SSSS…GLPG). Residues 908–913 (RSPSPQ) carry the RSXSXX motif 5 motif. Phosphoserine is present on Ser-987.

It belongs to the inositol 1,4,5-trisphosphate 5-phosphatase type II family.

The protein resides in the cytoplasm. It catalyses the reaction 1D-myo-inositol 1,4,5-trisphosphate + H2O = 1D-myo-inositol 1,4-bisphosphate + phosphate. The enzyme catalyses 1D-myo-inositol 1,3,4,5-tetrakisphosphate + H2O = 1D-myo-inositol 1,3,4-trisphosphate + phosphate. The catalysed reaction is a 1,2-diacyl-sn-glycero-3-phospho-(1D-myo-inositol-4,5-bisphosphate) + H2O = a 1,2-diacyl-sn-glycero-3-phospho-(1D-myo-inositol 4-phosphate) + phosphate. Its function is as follows. Inositol 5-phosphatase, which converts inositol 1,4,5-trisphosphate to inositol 1,4-bisphosphate. Also converts phosphatidylinositol 4,5-bisphosphate to phosphatidylinositol 4-phosphate and inositol 1,3,4,5-tetrakisphosphate to inositol 1,3,4-trisphosphate in vitro. May be involved in modulation of the function of inositol and phosphatidylinositol polyphosphate-binding proteins that are present at membranes ruffles. The polypeptide is Phosphatidylinositol 4,5-bisphosphate 5-phosphatase A (Inpp5j) (Mus musculus (Mouse)).